A 104-amino-acid chain; its full sequence is Small ribosomal subunit protein uS10 (104 aa).

The protein belongs to the universal ribosomal protein uS10 family. In terms of assembly, part of the 30S ribosomal subunit.

Functionally, involved in the binding of tRNA to the ribosomes. The chain is Small ribosomal subunit protein uS10 from Thermoplasma acidophilum (strain ATCC 25905 / DSM 1728 / JCM 9062 / NBRC 15155 / AMRC-C165).